The chain runs to 897 residues: Interleukin enhancer-binding factor 3-A (897 aa).

The 375-residue stretch at 5–379 folds into the DZF domain; that stretch reads RIFLNDDRHV…PLKRPIEEDG (375 aa). Disordered stretches follow at residues 52–85, 364–403, and 466–502; these read QEKD…GENP, TTYA…PPQV, and MGLP…EVDS. Basic and acidic residues-rich tracts occupy residues 72 to 81 and 373 to 384; these read EEGKDSEMKT and RPIEEDGDDKSP. The short motif at 372–390 is the Bipartite nuclear localization signal element; it reads KRPIEEDGDDKSPSKKKKK. 2 consecutive DRBM domains span residues 399-468 and 521-587; these read EPPQ…DMGL and HGKN…KLFP. Disordered stretches follow at residues 627 to 650 and 708 to 797; these read PPPQ…GRGG and GDSY…AQGA. Residues 637–650 show a composition bias toward gly residues; it reads RGGMNRGRGRGRGG. The segment covering 714–747 has biased composition (pro residues); it reads PTPPKPFVNKKPPPPQQQQQQQPPPQHASNPPKP. The segment covering 749 to 794 has biased composition (low complexity); the sequence is YNQGYQGHQGGQQQQQQQQQQQTYNQNQYSNYGPPQKQKGGYNQGA.

As to quaternary structure, a component of a ybx2/frgy2-containing mRNA-ribonucleoprotein (mRNP) complex. Also a component of the CCAAT box transcription factor (CBTF) complex. Post-translationally, phosphorylated. Phosphorylation affects nuclear translocation. In terms of processing, methylated by protein arginine N-methyltransferase 1 (prmt1b) in the RGG-rich domain. Methylation decreases DNA-binding and thereby decreases transcription of the gata2 gene, but does not regulate dsRNA binding or subcellular localization. As to expression, expressed mainly in the ectoderm (at protein level).

It localises to the nucleus. The protein resides in the cytoplasm. RNA-binding protein that plays an essential role in the biogenesis of circular RNAs (circRNAs) which are produced by back-splicing circularization of pre-mRNAs. Within the nucleus, promotes circRNAs processing by stabilizing the regulatory elements residing in the flanking introns of the circularized exons. Plays thereby a role in the back-splicing of a subset of circRNAs. As a consequence, participates in a wide range of transcriptional and post-transcriptional processes. Binds to poly-U elements and AU-rich elements (AREs) in the 3'-UTR of target mRNAs. Upon viral infection, ILF3 accumulates in the cytoplasm and participates in the innate antiviral response. Mechanistically, ILF3 becomes phosphorylated and activated by the double-stranded RNA-activated protein kinase/PKR which releases ILF3 from cellular mature circRNAs. In turn, unbound ILF3 molecules are able to interact with and thus inhibit viral mRNAs. Has a cytoplasmic role early in development as part of a ribonucleoprotein (mRNP) complex which may regulate mRNA transport and/or translation. Following nuclear localization at the mid-blastula transition, acts as a transcription factor and binds the 5'-CCAAT-3' promoter sequence to regulate transcription of the gata2 gene as a subunit of the CCAAT box transcription factor (CBTF). Its role as an mRNP component negatively regulates its activity as a transcription factor by precluding its nuclear localization. The sequence is that of Interleukin enhancer-binding factor 3-A (ilf3-a) from Xenopus laevis (African clawed frog).